Reading from the N-terminus, the 390-residue chain is Queuine tRNA-ribosyltransferase (390 aa).

D92 functions as the Proton acceptor in the catalytic mechanism. Residues 92 to 96 (DSGGF), D146, Q195, and G222 contribute to the substrate site. The tract at residues 253-259 (GVGTPED) is RNA binding. The active-site Nucleophile is D272. Residues 277 to 281 (TRNAR) form an RNA binding; important for wobble base 34 recognition region. Residues C310, C312, C315, and H354 each coordinate Zn(2+).

This sequence belongs to the queuine tRNA-ribosyltransferase family. Homodimer. Within each dimer, one monomer is responsible for RNA recognition and catalysis, while the other monomer binds to the replacement base PreQ1. The cofactor is Zn(2+).

It catalyses the reaction 7-aminomethyl-7-carbaguanine + guanosine(34) in tRNA = 7-aminomethyl-7-carbaguanosine(34) in tRNA + guanine. It functions in the pathway tRNA modification; tRNA-queuosine biosynthesis. In terms of biological role, catalyzes the base-exchange of a guanine (G) residue with the queuine precursor 7-aminomethyl-7-deazaguanine (PreQ1) at position 34 (anticodon wobble position) in tRNAs with GU(N) anticodons (tRNA-Asp, -Asn, -His and -Tyr). Catalysis occurs through a double-displacement mechanism. The nucleophile active site attacks the C1' of nucleotide 34 to detach the guanine base from the RNA, forming a covalent enzyme-RNA intermediate. The proton acceptor active site deprotonates the incoming PreQ1, allowing a nucleophilic attack on the C1' of the ribose to form the product. After dissociation, two additional enzymatic reactions on the tRNA convert PreQ1 to queuine (Q), resulting in the hypermodified nucleoside queuosine (7-(((4,5-cis-dihydroxy-2-cyclopenten-1-yl)amino)methyl)-7-deazaguanosine). This Acidovorax sp. (strain JS42) protein is Queuine tRNA-ribosyltransferase.